We begin with the raw amino-acid sequence, 451 residues long: Ribosomal protein uS12 methylthiotransferase RimO (451 aa).

The region spanning 17–127 (PTIGFVSLGC…VLAQVHEHLP (111 aa)) is the MTTase N-terminal domain. [4Fe-4S] cluster contacts are provided by Cys-26, Cys-62, Cys-91, Cys-160, Cys-164, and Cys-167. Residues 146 to 383 (LTPRHYAYLK…MQLQQRISTE (238 aa)) enclose the Radical SAM core domain. A TRAM domain is found at 386–451 (KQKVGQTLPV…DEYDLWGTRV (66 aa)).

Belongs to the methylthiotransferase family. RimO subfamily. The cofactor is [4Fe-4S] cluster.

Its subcellular location is the cytoplasm. The enzyme catalyses L-aspartate(89)-[ribosomal protein uS12]-hydrogen + (sulfur carrier)-SH + AH2 + 2 S-adenosyl-L-methionine = 3-methylsulfanyl-L-aspartate(89)-[ribosomal protein uS12]-hydrogen + (sulfur carrier)-H + 5'-deoxyadenosine + L-methionine + A + S-adenosyl-L-homocysteine + 2 H(+). Functionally, catalyzes the methylthiolation of an aspartic acid residue of ribosomal protein uS12. The polypeptide is Ribosomal protein uS12 methylthiotransferase RimO (Cellvibrio japonicus (strain Ueda107) (Pseudomonas fluorescens subsp. cellulosa)).